The chain runs to 761 residues: Zinc finger protein 711 (761 aa).

Residues K224, K235, and K296 each participate in a glycyl lysine isopeptide (Lys-Gly) (interchain with G-Cter in SUMO2) cross-link. 5 C2H2-type zinc fingers span residues 383–408 (YPCH…HPDH), 414–436 (YQCT…LESH), 476–499 (HKCK…LAVH), 505–527 (HVCV…MRTH), and 533–556 (YQCQ…KSKH). The segment at 515 to 761 (RHPSELKKHM…IMRHHKEALM (247 aa)) is required for transcriptional activation. The C2H2-type 6; atypical zinc-finger motif lies at 562 to 584 (YKCEHCPQAFGDERELQRHLDLF). C564, C567, and H580 together coordinate Zn(2+). 6 consecutive C2H2-type zinc fingers follow at residues 590–613 (HQCP…ISVH), 619–641 (HKCE…SDIH), 647–670 (HQCR…LSVH), 676–698 (LKCK…MKTH), 704–727 (YQCE…ISIH), and 733–755 (HRCE…IMRH).

It belongs to the krueppel C2H2-type zinc-finger protein family. As to quaternary structure, interacts with PHF8. Expressed in neural tissues.

The protein resides in the nucleus. In terms of biological role, transcription regulator required for brain development. Probably acts as a transcription factor that binds to the promoter of target genes and recruits PHF8 histone demethylase, leading to activated expression of genes involved in neuron development, such as KDM5C. May compete with transcription factor ARX for activation of expression of KDM5C. In Homo sapiens (Human), this protein is Zinc finger protein 711 (ZNF711).